Reading from the N-terminus, the 1364-residue chain is Collagen alpha-2(I) chain (1364 aa).

The N-terminal stretch at 1–22 is a signal peptide; sequence MLSFVDTRTLLLLAVTSCLATC. Position 23 is a pyrrolidone carboxylic acid (Q23). The propeptide at 23-79 is N-terminal propeptide; it reads QSLQEATARKGPSGDRGPRGERGPPGPPGRDGDDGIPGPPGPPGPPGPPGLGGNFAA. The interval 26–1128 is disordered; the sequence is QEATARKGPS…QPRSPTSLRP (1103 aa). Positions 34 to 44 are enriched in basic and acidic residues; sequence PSGDRGPRGER. Residues 59-71 show a composition bias toward pro residues; the sequence is PGPPGPPGPPGPP. Q80 bears the Pyrrolidone carboxylic acid mark. K84 carries the post-translational modification Allysine. Residues 93–130 show a composition bias toward low complexity; the sequence is LMGPRGPPGASGAPGPQGFQGPPGEPGEPGQTGPAGAR. A 4-hydroxyproline mark is found at P100, P106, P115, P118, P121, P133, P136, P145, P151, P166, P169, and P172. Over residues 139-153 the composition is skewed to basic and acidic residues; it reads AGEDGHPGKPGRPGE. A 5-hydroxylysine; alternate modification is found at K175. A glycan (O-linked (Gal...) hydroxylysine; alternate) is linked at K175. 2 positions are modified to 4-hydroxyproline: P190 and P193. K196 is modified (5-hydroxylysine). 4-hydroxyproline is present on residues P199, P202, P208, P217, P226, P253, P256, and P259. The segment covering 223-252 has biased composition (low complexity); the sequence is VGAPGPAGARGSDGSVGPVGPAGPIGSAGP. 5-hydroxylysine is present on K262. Residues P271, P286, P295, and P304 each carry the 4-hydroxyproline modification. Low complexity predominate over residues 277–291; it reads AGPRGEVGLPGLSGP. Low complexity predominate over residues 298–319; it reads PGANGLPGAKGAAGLPGVAGAP. K307 bears the 5-hydroxylysine mark. 4-hydroxyproline is present on residues P313, P319, P322, P328, and P346. The span at 328–343 shows a compositional bias: low complexity; it reads PGPVGAAGATGARGLV. Residue K352 is modified to 5-hydroxylysine. 9 positions are modified to 4-hydroxyproline: P361, P367, P370, P391, P394, P400, P406, P439, and P442. The span at 396 to 406 shows a compositional bias: low complexity; that stretch reads LRGNPGSRGLP. 2 stretches are compositionally biased toward low complexity: residues 468–487 and 511–535; these read LPGI…RGEP and AGLA…PGLQ. The span at 536–545 shows a compositional bias: gly residues; the sequence is GVQGGKGEQG. Composition is skewed to low complexity over residues 592 to 609, 621 to 643, 666 to 688, and 715 to 735; these read PGES…SRGP, EPGV…PGER, SPGR…AGAN, and VGPA…QPGA. The segment covering 736-745 has biased composition (basic and acidic residues); the sequence is KGERGTKGPK. A compositionally biased stretch (low complexity) spans 748-763; it reads NGPVGPTGPVGAAGPS. Over residues 773–782 the composition is skewed to gly residues; the sequence is GSRGDGGPPG. Low complexity-rich tracts occupy residues 783 to 793, 861 to 874, 891 to 930, 948 to 961, and 978 to 999; these read ATGFPGAAGRT, PQGL…LGLP, EPGP…NPGN, YPGN…AGAP, and EPGP…PSGP. Residues 1003-1014 show a composition bias toward basic and acidic residues; the sequence is RGDKGEPGDKGP. Positions 1087–1101 are enriched in pro residues; the sequence is AGPPGPPGPPGPPGP. Positions 1118 to 1364 are cleaved as a propeptide — C-terminal propeptide; it reads DQPRSPTSLR…RLNIGPVCFK (247 aa). The Fibrillar collagen NC1 domain maps to 1131–1364; sequence YEVDATLKSL…RLNIGPVCFK (234 aa). 3 disulfide bridges follow: C1161-C1193, C1201-C1362, and C1270-C1315. Positions 1179, 1181, 1182, 1184, and 1187 each coordinate Ca(2+). N1265 carries N-linked (GlcNAc...) asparagine glycosylation.

This sequence belongs to the fibrillar collagen family. Trimers of one alpha 2(I) and two alpha 1(I) chains. Interacts (via C-terminus) with TMEM131 (via PapD-L domain); the interaction is direct and is involved in assembly and TRAPPIII ER-to-Golgi transport complex-dependent secretion of collagen. Prolines at the third position of the tripeptide repeating unit (G-X-Y) are hydroxylated in some or all of the chains. Forms the fibrils of tendon, ligaments and bones. In bones the fibrils are mineralized with calcium hydroxyapatite.

The protein resides in the secreted. Its subcellular location is the extracellular space. It is found in the extracellular matrix. In terms of biological role, type I collagen is a member of group I collagen (fibrillar forming collagen). The protein is Collagen alpha-2(I) chain (COL1A2) of Bos taurus (Bovine).